We begin with the raw amino-acid sequence, 230 residues long: Ureidoacrylate amidohydrolase RutB (230 aa).

Residue Asp24 is the Proton acceptor of the active site. The active site involves Lys133. Cys166 serves as the catalytic Nucleophile.

The protein belongs to the isochorismatase family. RutB subfamily.

It catalyses the reaction (Z)-3-ureidoacrylate + H2O + H(+) = (Z)-3-aminoacrylate + NH4(+) + CO2. The enzyme catalyses (Z)-3-ureidoacrylate + H2O = (Z)-3-aminoacrylate + carbamate + H(+). It carries out the reaction (Z)-2-methylureidoacrylate + H2O + H(+) = (Z)-2-methylaminoacrylate + NH4(+) + CO2. In terms of biological role, hydrolyzes ureidoacrylate to form aminoacrylate and carbamate. The carbamate hydrolyzes spontaneously, thereby releasing one of the nitrogen atoms of the pyrimidine ring as ammonia and one of its carbon atoms as CO2. This Escherichia coli O150:H5 (strain SE15) protein is Ureidoacrylate amidohydrolase RutB.